Consider the following 157-residue polypeptide: SsrA-binding protein (157 aa).

Over residues 136 to 151 (KRETEKKRDWSREKGR) the composition is skewed to basic and acidic residues. Positions 136 to 157 (KRETEKKRDWSREKGRLLRARG) are disordered.

This sequence belongs to the SmpB family.

It localises to the cytoplasm. Functionally, required for rescue of stalled ribosomes mediated by trans-translation. Binds to transfer-messenger RNA (tmRNA), required for stable association of tmRNA with ribosomes. tmRNA and SmpB together mimic tRNA shape, replacing the anticodon stem-loop with SmpB. tmRNA is encoded by the ssrA gene; the 2 termini fold to resemble tRNA(Ala) and it encodes a 'tag peptide', a short internal open reading frame. During trans-translation Ala-aminoacylated tmRNA acts like a tRNA, entering the A-site of stalled ribosomes, displacing the stalled mRNA. The ribosome then switches to translate the ORF on the tmRNA; the nascent peptide is terminated with the 'tag peptide' encoded by the tmRNA and targeted for degradation. The ribosome is freed to recommence translation, which seems to be the essential function of trans-translation. The polypeptide is SsrA-binding protein (Rhodopseudomonas palustris (strain HaA2)).